Reading from the N-terminus, the 373-residue chain is Melanoma-associated antigen C2 (373 aa).

The segment at 1–102 (MPPVPGVPFR…QGPSQSPLSS (102 aa)) is disordered. The span at 40-60 (SSASSTLYLVFSPSSFSTSSS) shows a compositional bias: low complexity. Over residues 85–94 (SSPPQGPPQG) the composition is skewed to pro residues. Residues 135-373 (SSFTYTLDEK…VMSSNVSFSE (239 aa)) form an interaction with TRIM28 region. Residues 141–336 (LDEKVAELVE…SSFPSWYKDA (196 aa)) enclose the MAGE domain.

In terms of assembly, interacts with TRIM28 and UBE2H. As to expression, not expressed in normal tissues, except in germ cells in the seminiferous tubules and in Purkinje cells of the cerebellum. Expressed in various tumors, including melanoma, lymphoma, as well as pancreatic cancer, mammary gland cancer, non-small cell lung cancer and liver cancer. In hepatocellular carcinoma, there is an inverse correlation between tumor differentiation and protein expression, i.e. the lower the differentiation, the higher percentage of expression.

The protein localises to the cytoplasm. The protein resides in the nucleus. Proposed to enhance ubiquitin ligase activity of RING-type zinc finger-containing E3 ubiquitin-protein ligases. In vitro enhances ubiquitin ligase activity of TRIM28 and stimulates p53/TP53 ubiquitination in presence of Ubl-conjugating enzyme UBE2H leading to p53/TP53 degradation. Proposed to act through recruitment and/or stabilization of the Ubl-conjugating enzymes (E2) at the E3:substrate complex. The polypeptide is Melanoma-associated antigen C2 (MAGEC2) (Homo sapiens (Human)).